The sequence spans 1127 residues: uncharacterized protein (1127 aa).

Residues 1-26 (MRIHQRSAPCVPVLLFLFLPSAPLCA) form the signal peptide. The disordered stretch occupies residues 533-600 (ETESLSPPAD…ASSSPSEMAV (68 aa)). Low complexity-rich tracts occupy residues 536-549 (SLSP…TPSP) and 583-599 (AGAS…SEMA). A coiled-coil region spans residues 1076–1126 (SEDEKEYQRALQELQKGNKLVASAVVEQLLQKDRNKKSAKIQQLKKRIDAQ).

This is an uncharacterized protein from Treponema pallidum (strain Nichols).